The chain runs to 186 residues: MRRLAVIASLAWALGGCATVAPPPQAAIPVPLADAWTLQGRLGVQTERESLSGQIRWQHGGGVDQVLLTSPLGQGVARIVRDPEGVSLELPGQPVRRATDVDTLTRDALGYELPVAGLAWWIQARPDPLREAAVALGDDGRPARIVQDGWTIDYLQYGADARPRKLVVSRAGLEIRLVADSWQSAP.

The first 16 residues, Met-1–Gly-16, serve as a signal peptide directing secretion. Cys-17 carries N-palmitoyl cysteine lipidation. Residue Cys-17 is the site of S-diacylglycerol cysteine attachment.

This sequence belongs to the LolB family. Monomer.

It localises to the cell outer membrane. Functionally, plays a critical role in the incorporation of lipoproteins in the outer membrane after they are released by the LolA protein. This is Outer-membrane lipoprotein LolB from Thiobacillus denitrificans (strain ATCC 25259 / T1).